The following is a 111-amino-acid chain: Nucleoid-associated protein CYB_2894 (111 aa).

It belongs to the YbaB/EbfC family. As to quaternary structure, homodimer.

The protein resides in the cytoplasm. It localises to the nucleoid. Its function is as follows. Binds to DNA and alters its conformation. May be involved in regulation of gene expression, nucleoid organization and DNA protection. This is Nucleoid-associated protein CYB_2894 from Synechococcus sp. (strain JA-2-3B'a(2-13)) (Cyanobacteria bacterium Yellowstone B-Prime).